The sequence spans 491 residues: Proline--tRNA ligase (491 aa).

This sequence belongs to the class-II aminoacyl-tRNA synthetase family. ProS type 3 subfamily. Homodimer.

Its subcellular location is the cytoplasm. The catalysed reaction is tRNA(Pro) + L-proline + ATP = L-prolyl-tRNA(Pro) + AMP + diphosphate. Functionally, catalyzes the attachment of proline to tRNA(Pro) in a two-step reaction: proline is first activated by ATP to form Pro-AMP and then transferred to the acceptor end of tRNA(Pro). This is Proline--tRNA ligase from Halorubrum lacusprofundi (strain ATCC 49239 / DSM 5036 / JCM 8891 / ACAM 34).